We begin with the raw amino-acid sequence, 385 residues long: Palmitoyl-[acyl-carrier-protein] 4-desaturase, chloroplastic (385 aa).

Residues 1–36 constitute a chloroplast transit peptide; that stretch reads MAMKLNALMTLQCPKRNMFTRIAPPQAGRVRSKVSM. Fe cation-binding residues include Glu126, Glu164, His167, Glu217, Glu250, and His253.

Belongs to the fatty acid desaturase type 2 family. As to quaternary structure, homodimer. Fe(2+) is required as a cofactor. In terms of tissue distribution, found only in tissues which synthesize petroselinic acid, such as developing seeds.

The protein resides in the plastid. It localises to the chloroplast. It carries out the reaction hexadecanoyl-[ACP] + 2 reduced [2Fe-2S]-[ferredoxin] + O2 + 2 H(+) = (4Z)-hexadecenoyl-[ACP] + 2 oxidized [2Fe-2S]-[ferredoxin] + 2 H2O. In terms of biological role, converts palmitoyl-ACP to (4Z)-hexadec-4-enoyl-ACP by introduction of a cis double bond between carbons 4 and 5 of the acyl chain. The polypeptide is Palmitoyl-[acyl-carrier-protein] 4-desaturase, chloroplastic (Coriandrum sativum (Coriander)).